We begin with the raw amino-acid sequence, 506 residues long: Cobyric acid synthase (506 aa).

Residues 251–448 (DITIAIVQLP…LHGLFDSDAF (198 aa)) form the GATase cobBQ-type domain. Cys332 functions as the Nucleophile in the catalytic mechanism. His440 is a catalytic residue.

It belongs to the CobB/CobQ family. CobQ subfamily.

It functions in the pathway cofactor biosynthesis; adenosylcobalamin biosynthesis. Catalyzes amidations at positions B, D, E, and G on adenosylcobyrinic A,C-diamide. NH(2) groups are provided by glutamine, and one molecule of ATP is hydrogenolyzed for each amidation. This is Cobyric acid synthase from Salmonella choleraesuis (strain SC-B67).